Reading from the N-terminus, the 717-residue chain is MAPNLHIKKAFMAMRAMGIEDARVKPVLKNLLALYEKNWELIAEDNYRVLADAIFDSHEDQAIQESEEKKADEVKEDEGCAAEVDRGKKKLHESIEDDEDVMAESDRPLKRLRRRGEGGSALASPSLGSPTLEGPSINDEENAPILLPYHPVPIENDHDAGELILTKVEPITNMPLSSIPDSVDRGDSSMLEIDKSNGHVEEKAGETVSTADGTTNDISPTTVARFSDHKLAATIEEPPALELASSASGEVKINLSFAPATGGSNPHLPSMEELRRAMEEKCLRSYKILDPNFSVLGFMNDICSCYLDLATNGRDSANQLPKNLPFVTTNIDALKKSAARMAYTSQASNDVVEICSNEHMRDAENGAVGDSMALVVVPECQLSADEWRLISSVGDISLGKETVEIPWVNEVNDKVPPVFHYIAQSLVYQDAAVKFSLGNIRDDQCCSSCCGDCLAPSMACRCATAFNGFAYTVDGLLQEDFLEQCISEARDPRKQMLLYCKECPLEKAKKEVILEPCKGHLKRKAIKECWSKCGCMKNCGNRVVQQGIHNKLQVFFTPNGRGWGLRTLEKLPKGAFVCELAGEILTIPELFQRISDRPTSPVILDAYWGSEDISGDDKALSLEGTHYGNISRFINHRCLDANLIEIPVHAETTDSHYYHLAFFTTREIDAMEELTWDYGVPFNQDVFPTSPFHCQCGSDFCRVRKQISKGKNVKKRA.

The span at 61-73 (QAIQESEEKKADE) shows a compositional bias: basic and acidic residues. Residues 61–136 (QAIQESEEKK…LGSPTLEGPS (76 aa)) are disordered. Low complexity predominate over residues 120–130 (SALASPSLGSP). Zn(2+) is bound by residues Cys445, Cys446, Cys449, Cys453, Cys462, Cys529, Cys533, Cys535, and Cys539. The 90-residue stretch at 458–547 (MACRCATAFN…NCGNRVVQQG (90 aa)) folds into the Pre-SET domain. The SET domain occupies 550–679 (NKLQVFFTPN…AMEELTWDYG (130 aa)). S-adenosyl-L-methionine contacts are provided by residues 561-563 (RGW) and 635-636 (NH). Residue Cys638 participates in Zn(2+) binding. Tyr678 provides a ligand contact to S-adenosyl-L-methionine. The region spanning 690 to 706 (SPFHCQCGSDFCRVRKQ) is the Post-SET domain. The Zn(2+) site is built by Cys694, Cys696, and Cys701.

The protein belongs to the class V-like SAM-binding methyltransferase superfamily. Histone-lysine methyltransferase family. Interacts with SUVR1, CHR19, CHR28 and itself. Interacts with CHR27.

Its subcellular location is the nucleus. It is found in the chromosome. Its function is as follows. Probable inactive histone-lysine methyltransferase that acts as regulator of transctiptional gene silencing independently of histone H3K9 methylation. Contributes to transcriptional gene silencing at RNA-directed DNA methylation (RdDM) target loci but also at RdDM-independent target loci. Forms a complex with SUVR1 and associates with the SNF2-related chromatin-remodeling proteins CHR19, CHR27, and CHR28, thereby mediating nucleosome positioning and transcriptional silencing. Does not possess histone-lysine methyltransferase activity in vitro, and the conserved catalytic sites of SUVR2 are dispensable for its function in transcriptional gene silencing. This Arabidopsis thaliana (Mouse-ear cress) protein is Probable inactive histone-lysine N-methyltransferase SUVR2 (SUVR2).